A 251-amino-acid chain; its full sequence is Imidazole glycerol phosphate synthase subunit HisF (251 aa).

Active-site residues include Asp11 and Asp130.

The protein belongs to the HisA/HisF family. As to quaternary structure, heterodimer of HisH and HisF.

The protein resides in the cytoplasm. The catalysed reaction is 5-[(5-phospho-1-deoxy-D-ribulos-1-ylimino)methylamino]-1-(5-phospho-beta-D-ribosyl)imidazole-4-carboxamide + L-glutamine = D-erythro-1-(imidazol-4-yl)glycerol 3-phosphate + 5-amino-1-(5-phospho-beta-D-ribosyl)imidazole-4-carboxamide + L-glutamate + H(+). Its pathway is amino-acid biosynthesis; L-histidine biosynthesis; L-histidine from 5-phospho-alpha-D-ribose 1-diphosphate: step 5/9. IGPS catalyzes the conversion of PRFAR and glutamine to IGP, AICAR and glutamate. The HisF subunit catalyzes the cyclization activity that produces IGP and AICAR from PRFAR using the ammonia provided by the HisH subunit. This Natranaerobius thermophilus (strain ATCC BAA-1301 / DSM 18059 / JW/NM-WN-LF) protein is Imidazole glycerol phosphate synthase subunit HisF.